The sequence spans 31 residues: Photosystem I reaction center subunit XII (31 aa).

The helical transmembrane segment at 7-26 (QIFIALLTALIPAFFALKLG) threads the bilayer.

Belongs to the PsaM family.

The protein resides in the plastid. It localises to the chloroplast thylakoid membrane. This is Photosystem I reaction center subunit XII from Euglena granulata.